The primary structure comprises 203 residues: MRLTRDFYAKDARALAKELLGKVLVREVDGIKLKGKIVETEAYIGAIDKASHAYGGRRTKRTEPLYGKPGIAYVYFIYGKYFCFNIISKTEGEAEGVLIRALEPLENINLISKLRFNKEFEELNNYQRKNITSGPSKLCMAFNINRDNNWEDLCESSSLYVEDVFYNDFEIIETVRVGIDYAEEARDFLWRYYIKDNAFVSVK.

The protein belongs to the DNA glycosylase MPG family.

In Clostridium botulinum (strain Langeland / NCTC 10281 / Type F), this protein is Putative 3-methyladenine DNA glycosylase.